We begin with the raw amino-acid sequence, 159 residues long: Ribosomal RNA large subunit methyltransferase H (159 aa).

Residues Leu-76, Gly-108, and 127–132 (FGRMTY) each bind S-adenosyl-L-methionine.

Belongs to the RNA methyltransferase RlmH family. As to quaternary structure, homodimer.

The protein resides in the cytoplasm. The catalysed reaction is pseudouridine(1915) in 23S rRNA + S-adenosyl-L-methionine = N(3)-methylpseudouridine(1915) in 23S rRNA + S-adenosyl-L-homocysteine + H(+). Its function is as follows. Specifically methylates the pseudouridine at position 1915 (m3Psi1915) in 23S rRNA. This chain is Ribosomal RNA large subunit methyltransferase H, found in Carboxydothermus hydrogenoformans (strain ATCC BAA-161 / DSM 6008 / Z-2901).